A 332-amino-acid polypeptide reads, in one-letter code: NADH-quinone oxidoreductase subunit H (332 aa).

9 consecutive transmembrane segments (helical) span residues Ile-8–Phe-28, Ile-44–Ala-66, Pro-78–Ile-98, Val-120–Gly-140, Ile-157–Ile-177, Trp-196–Leu-216, Met-245–Phe-265, Phe-274–Trp-294, and Trp-312–Phe-332.

The protein belongs to the complex I subunit 1 family. In terms of assembly, NDH-1 is composed of 14 different subunits. Subunits NuoA, H, J, K, L, M, N constitute the membrane sector of the complex.

The protein localises to the cell inner membrane. The enzyme catalyses a quinone + NADH + 5 H(+)(in) = a quinol + NAD(+) + 4 H(+)(out). Its function is as follows. NDH-1 shuttles electrons from NADH, via FMN and iron-sulfur (Fe-S) centers, to quinones in the respiratory chain. The immediate electron acceptor for the enzyme in this species is believed to be ubiquinone. Couples the redox reaction to proton translocation (for every two electrons transferred, four hydrogen ions are translocated across the cytoplasmic membrane), and thus conserves the redox energy in a proton gradient. This subunit may bind ubiquinone. This is NADH-quinone oxidoreductase subunit H from Helicobacter hepaticus (strain ATCC 51449 / 3B1).